Reading from the N-terminus, the 627-residue chain is Chaperone protein DnaK (627 aa).

Thr197 carries the post-translational modification Phosphothreonine; by autocatalysis. The span at 598 to 611 (AYAKEQGGQQGAAD) shows a compositional bias: low complexity. The interval 598–627 (AYAKEQGGQQGAADAGKKADDDDVIDAEVE) is disordered. Over residues 618 to 627 (DDDVIDAEVE) the composition is skewed to acidic residues.

It belongs to the heat shock protein 70 family.

In terms of biological role, acts as a chaperone. This Sulfurovum sp. (strain NBC37-1) protein is Chaperone protein DnaK.